The sequence spans 316 residues: Pseudouridine-5'-phosphate glycosidase (316 aa).

The Proton donor role is filled by glutamate 31. Positions 92 and 112 each coordinate substrate. Aspartate 144 serves as a coordination point for Mn(2+). Residue 146–148 (SAD) participates in substrate binding. The active-site Nucleophile is lysine 165.

This sequence belongs to the pseudouridine-5'-phosphate glycosidase family. In terms of assembly, homotrimer. Requires Mn(2+) as cofactor.

It carries out the reaction D-ribose 5-phosphate + uracil = psi-UMP + H2O. Catalyzes the reversible cleavage of pseudouridine 5'-phosphate (PsiMP) to ribose 5-phosphate and uracil. Functions biologically in the cleavage direction, as part of a pseudouridine degradation pathway. Part of an operon that could be involved in the biosynthesis of the blue pigment indigoidine, which is implicated in pathogenicity and protection from oxidative stress. In Dickeya dadantii (strain 3937) (Erwinia chrysanthemi (strain 3937)), this protein is Pseudouridine-5'-phosphate glycosidase.